The primary structure comprises 351 residues: Fructose-1,6-bisphosphatase class 1 (351 aa).

Residues Glu-94, Asp-113, Leu-115, and Asp-116 each coordinate Mg(2+). Residues 116-119 and Asn-207 each bind substrate; that span reads DGSS. Glu-279 provides a ligand contact to Mg(2+).

It belongs to the FBPase class 1 family. As to quaternary structure, homotetramer. Mg(2+) serves as cofactor.

The protein localises to the cytoplasm. The catalysed reaction is beta-D-fructose 1,6-bisphosphate + H2O = beta-D-fructose 6-phosphate + phosphate. The protein operates within carbohydrate biosynthesis; gluconeogenesis. This Methylobacterium radiotolerans (strain ATCC 27329 / DSM 1819 / JCM 2831 / NBRC 15690 / NCIMB 10815 / 0-1) protein is Fructose-1,6-bisphosphatase class 1.